The following is a 657-amino-acid chain: Glycogen debranching enzyme (657 aa).

Residue D336 is the Nucleophile of the active site. E371 acts as the Proton donor in catalysis. Basic and acidic residues predominate over residues 458–467 (NEANGEENRD). A disordered region spans residues 458–479 (NEANGEENRDGTNNNYSNNHGK).

It belongs to the glycosyl hydrolase 13 family.

The catalysed reaction is Hydrolysis of (1-&gt;6)-alpha-D-glucosidic linkages to branches with degrees of polymerization of three or four glucose residues in limit dextrin.. The protein operates within glycan degradation; glycogen degradation. Functionally, removes maltotriose and maltotetraose chains that are attached by 1,6-alpha-linkage to the limit dextrin main chain, generating a debranched limit dextrin. The chain is Glycogen debranching enzyme from Escherichia coli (strain SE11).